The chain runs to 213 residues: Na(+)-translocating NADH-quinone reductase subunit D (213 aa).

6 helical membrane passes run 21 to 41 (PLIA…VKTA), 42 to 62 (ITMG…VSLL), 77 to 97 (IIIS…FFNI), 101 to 121 (LSVF…AESL), 131 to 151 (FLDG…VSII), and 183 to 203 (FGLM…IWVV).

The protein belongs to the NqrDE/RnfAE family. Composed of six subunits; NqrA, NqrB, NqrC, NqrD, NqrE and NqrF.

Its subcellular location is the cell inner membrane. It carries out the reaction a ubiquinone + n Na(+)(in) + NADH + H(+) = a ubiquinol + n Na(+)(out) + NAD(+). Functionally, NQR complex catalyzes the reduction of ubiquinone-1 to ubiquinol by two successive reactions, coupled with the transport of Na(+) ions from the cytoplasm to the periplasm. NqrA to NqrE are probably involved in the second step, the conversion of ubisemiquinone to ubiquinol. This chain is Na(+)-translocating NADH-quinone reductase subunit D, found in Chlamydia felis (strain Fe/C-56) (Chlamydophila felis).